Reading from the N-terminus, the 435-residue chain is Adenylosuccinate synthetase (435 aa).

Residues Gly-17–Lys-23 and Gly-47–Thr-49 contribute to the GTP site. Residue Asp-18 is the Proton acceptor of the active site. Positions 18 and 47 each coordinate Mg(2+). IMP-binding positions include Asp-18–Lys-21, Asn-45–His-48, Thr-138, Arg-152, Asn-232, Thr-247, and Arg-311. Catalysis depends on His-48, which acts as the Proton donor. Val-307–Arg-313 contributes to the substrate binding site. Residues Arg-313, Lys-339 to Asp-341, and Gly-421 to Gly-423 each bind GTP.

This sequence belongs to the adenylosuccinate synthetase family. As to quaternary structure, homodimer. Requires Mg(2+) as cofactor.

The protein localises to the cytoplasm. It catalyses the reaction IMP + L-aspartate + GTP = N(6)-(1,2-dicarboxyethyl)-AMP + GDP + phosphate + 2 H(+). Its pathway is purine metabolism; AMP biosynthesis via de novo pathway; AMP from IMP: step 1/2. Its function is as follows. Plays an important role in the de novo pathway and in the salvage pathway of purine nucleotide biosynthesis. Catalyzes the first committed step in the biosynthesis of AMP from IMP. The sequence is that of Adenylosuccinate synthetase from Caenorhabditis briggsae.